Here is a 254-residue protein sequence, read N- to C-terminus: MPQQIELRNIALQAAQPLVHGVSLTLQRGRVLALVGGSGSGKSLTCAATLGILPAGVRQTAGEILADGKPVSPYALRGIKIATIMQNPRSAFNPLHTMHTHARETCLALGKPADDATLTAAIEAVGLENAARVLKLYPFEMSGGMLQRMMIAMAVLCESPFIIADEPTTDLDVVAQARILDLLESIMQKQAPGMLLVTHDMGVVARLADDVAVMSQGKIVEQGDVETLFNAPKHTVTRSLVSAHLALYGMELAS.

The ABC transporter domain occupies 2–241; the sequence is PQQIELRNIA…PKHTVTRSLV (240 aa). 36-43 contributes to the ATP binding site; it reads GGSGSGKS.

Belongs to the ABC transporter superfamily. Nickel importer (TC 3.A.1.5.3) family. As to quaternary structure, the complex is composed of two ATP-binding proteins (NikD and NikE), two transmembrane proteins (NikB and NikC) and a solute-binding protein (NikA).

Its subcellular location is the cell inner membrane. It carries out the reaction Ni(2+)(out) + ATP + H2O = Ni(2+)(in) + ADP + phosphate + H(+). Its function is as follows. Part of the ABC transporter complex NikABCDE involved in nickel import. Responsible for energy coupling to the transport system. This is Nickel import ATP-binding protein NikD from Shigella flexneri serotype 5b (strain 8401).